The chain runs to 1051 residues: SWI/SNF-related matrix-associated actin-dependent regulator of chromatin subfamily A member 5 (1051 aa).

The span at 1–15 shows a compositional bias: pro residues; it reads MSSAVEPPPPPPPES. A disordered region spans residues 1–81; the sequence is MSSAVEPPPP…IQEPDPTYEE (81 aa). S2 bears the N-acetylserine mark. Gly residues predominate over residues 24-38; it reads GAGGSSSGNKGGPEG. Low complexity predominate over residues 39-53; it reads GAAPAAPCAAGSGPA. A Phosphothreonine modification is found at T55. The residue at position 65 (S65) is a Phosphoserine. A compositionally biased stretch (basic and acidic residues) spans 68–81; it reads KQKEIQEPDPTYEE. K82 participates in a covalent cross-link: Glycyl lysine isopeptide (Lys-Gly) (interchain with G-Cter in SUMO2). A Phosphothreonine modification is found at T112. Residues S115, S136, and S170 each carry the phosphoserine modification. Residues 191-356 enclose the Helicase ATP-binding domain; the sequence is ISLYENGING…WSLLNFLLPD (166 aa). 204–211 contributes to the ATP binding site; sequence DEMGLGKT. Residues 307-310 carry the DEAH box motif; that stretch reads DEAH. K439 carries the N6-acetyllysine modification. One can recognise a Helicase C-terminal domain in the interval 486 to 637; sequence VLDKLLPKLK…SIVIQQGRLV (152 aa). Glycyl lysine isopeptide (Lys-Gly) (interchain with G-Cter in SUMO2) cross-links involve residues K643, K646, K693, K721, and K734. S754 bears the Phosphoserine mark. 2 consecutive SANT domains span residues 839–891 and 942–1006; these read QGFT…ERCN and KGKN…LITL. Residue K965 forms a Glycyl lysine isopeptide (Lys-Gly) (interchain with G-Cter in SUMO2) linkage. The disordered stretch occupies residues 1014–1051; it reads LEEKEKAEKKKRGPKPSTQKRKMDGAPDGRGRKKKLKL. Over residues 1022–1033 the composition is skewed to basic residues; sequence KKKRGPKPSTQK. A compositionally biased stretch (basic and acidic residues) spans 1034–1043; the sequence is RKMDGAPDGR.

The protein belongs to the SNF2/RAD54 helicase family. ISWI subfamily. Component of the ACF-5 ISWI chromatin-remodeling complex (also called the ACF/WCRF complex) at least composed of SMARCA5/SNF2H and BAZ1A/ACF1, which regulates the spacing of histone octamers on the DNA template to facilitate access to DNA. Within the complex interacts with BAZ1A/ACF1; the interaction is direct and is required to slide nucleosomes from end to center positions on a DNA template in an ATP-dependent manner. Component of the CHRAC ISWI chromatin-remodeling complex at least composed of SMARCA5/SNF2H, BAZ1A/ACF1, CHRAC1 and POLE3; the complex preferentially binds DNA through the CHRAC1-POLE3 heterodimer and possesses ATP-dependent nucleosome-remodeling activity. Within the complex interacts with BAZ1A/ACF1; the interaction is direct and promotes the interaction with the POLE3-CHRAC1 heterodimer. Within the complex interacts with the POLE3-CHRAC1 heterodimer; the interaction is direct and enhances nucleosome sliding activity by the SMARCA5/SNF2H and BAZ1A/ACF1 interaction. Neither POLE3 nor CHRAC1 enhances nucleosome sliding activity of the ACF-5 ISWI chromatin remodeling complex. Component of the WICH-5 ISWI chromatin-remodeling complex (also called the WICH complex) at least composed of SMARCA5/SNF2H and BAZ1B/WSTF, which regulates the spacing of histone octamers on the DNA template to facilitate access to DNA. Within the complex interacts with BAZ1B/WSTF. Component of the NoRC-5 ISWI chromatin-remodeling complex (also called the NoRC chromatin-remodeling complex) at least composed of SMARCA5/SNF2H and BAZ2A/TIP5; the complex suppresses rDNA transcription by a combination of nucleosome remodeling, histone deacetylation, and DNA methylation. Within the complex interacts with BAZ2A/TIP5. Within the complex interacts with HDAC1. Component of the BRF-5 ISWI chromatin-remodeling complex at least composed of SMARCA5/SNF2H and BAZ2B. Within the complex interacts with BAZ2B. Component of the NURF-5 ISWI chromatin-remodeling complex at least composed of SMARCA5/SNF2H and BPTF. Within the complex interacts with BPFT. Component of the CERF-5 ISWI chromatin-remodeling complex at least composed of SMARCA5/SNF2H and CECR2. LUZP1 is detected as part of the CERF-5 complex in embryonic stem cells where it is involved in complex stabilization but is not detected in the complex in the testis. Component of the RSF-5 ISWI chromatin-remodeling complex (also called the RSF complex) at least composed of SMARCA5/SNF2H and RSF1. Within the complex interacts with RSF1. Interacts with the cohesin complex component RAD21; the interaction is direct. Interacts with the NuRD complex components HDAC2, RBBP4 and CHD4; the interactions are direct. Interacts with PCNA. Component of the B-WICH complex, at least composed of SMARCA5/SNF2H, BAZ1B/WSTF, SF3B1, DEK, MYO1C, ERCC6, MYBBP1A and DDX21 which positively regulates RNA polymerase III transcription. Interacts with MYO1C. Interacts with BEND3. Interacts with SIRT6; promoting recruitment to DNA damage sites. As to expression, ubiquitously expressed.

It localises to the nucleus. Its subcellular location is the chromosome. It catalyses the reaction ATP + H2O = ADP + phosphate + H(+). ATPase that possesses intrinsic ATP-dependent nucleosome-remodeling activity. Catalytic subunit of ISWI chromatin-remodeling complexes, which form ordered nucleosome arrays on chromatin and facilitate access to DNA during DNA-templated processes such as DNA replication, transcription, and repair; this may require intact histone H4 tails. Within the ISWI chromatin-remodeling complexes, slides edge- and center-positioned histone octamers away from their original location on the DNA template. Catalytic activity and histone octamer sliding propensity is regulated and determined by components of the ISWI chromatin-remodeling complexes. The BAZ1A/ACF1-, BAZ1B/WSTF-, BAZ2A/TIP5- and BAZ2B-containing ISWI chromatin-remodeling complexes regulate the spacing of nucleosomes along the chromatin and have the ability to slide mononucleosomes to the center of a DNA template in an ATP-dependent manner. The CECR2- and RSF1-containing ISWI chromatin-remodeling complexes do not have the ability to slide mononucleosomes to the center of a DNA template. Binds to core histones together with RSF1, and is required for the assembly of regular nucleosome arrays by the RSF-5 ISWI chromatin-remodeling complex. Involved in DNA replication and together with BAZ1A/ACF1 is required for replication of pericentric heterochromatin in S-phase. Probably plays a role in repression of RNA polymerase I dependent transcription of the rDNA locus, through the recruitment of the SIN3/HDAC1 corepressor complex to the rDNA promoter. The WICH-5 ISWI chromatin-remodeling complex regulates the transcription of various genes, has a role in RNA polymerase I and RNA polymerase III transcription, mediates the histone H2AX phosphorylation at 'Tyr-142', and is involved in the maintenance of chromatin structures during DNA replication processes. Essential component of the NoRC-5 ISWI chromatin-remodeling complex, a complex that mediates silencing of a fraction of rDNA by recruiting histone-modifying enzymes and DNA methyltransferases, leading to heterochromatin formation and transcriptional silencing. Required for embryonic development and differentiation, and the proliferation of early blastocyst-derived stem cells. In Mus musculus (Mouse), this protein is SWI/SNF-related matrix-associated actin-dependent regulator of chromatin subfamily A member 5 (Smarca5).